Here is a 207-residue protein sequence, read N- to C-terminus: Transcriptional regulatory protein RcsA (207 aa).

The HTH luxR-type domain occupies 131–196; sequence LNMPTLSLSR…VIYHVVRLTD (66 aa). The segment at residues 155-174 is a DNA-binding region (H-T-H motif); sequence TIQISDQMNIKAKTVSSHKG.

This sequence belongs to the RcsA family. In terms of assembly, interacts with RcsB.

Functionally, component of the Rcs signaling system, which controls transcription of numerous genes. Binds, with RcsB, to the RcsAB box to regulate expression of genes. The chain is Transcriptional regulatory protein RcsA from Escherichia coli O157:H7.